We begin with the raw amino-acid sequence, 236 residues long: Orotidine 5'-phosphate decarboxylase (236 aa).

Substrate is bound by residues aspartate 14, lysine 36, 63–72, threonine 123, arginine 184, glutamine 193, glycine 213, and arginine 214; that span reads DLKFHDIPNT. Catalysis depends on lysine 65, which acts as the Proton donor.

Belongs to the OMP decarboxylase family. Type 1 subfamily. Homodimer.

It carries out the reaction orotidine 5'-phosphate + H(+) = UMP + CO2. It participates in pyrimidine metabolism; UMP biosynthesis via de novo pathway; UMP from orotate: step 2/2. Catalyzes the decarboxylation of orotidine 5'-monophosphate (OMP) to uridine 5'-monophosphate (UMP). The polypeptide is Orotidine 5'-phosphate decarboxylase (Marinobacter nauticus (strain ATCC 700491 / DSM 11845 / VT8) (Marinobacter aquaeolei)).